A 70-amino-acid chain; its full sequence is Alpha-toxin Bot9 (70 aa).

The 64-residue stretch at 6–69 (RDGYIVYPNN…PIKDPSYKCY (64 aa)) folds into the LCN-type CS-alpha/beta domain. 4 cysteine pairs are disulfide-bonded: Cys-16/Cys-68, Cys-20/Cys-40, Cys-26/Cys-50, and Cys-30/Cys-52.

This sequence belongs to the long (4 C-C) scorpion toxin superfamily. Sodium channel inhibitor family. Alpha subfamily. Expressed by the venom gland.

Its subcellular location is the secreted. In terms of biological role, alpha toxins bind voltage-independently at site-3 of sodium channels (Nav) and inhibit the inactivation of the activated channels, thereby blocking neuronal transmission. This toxin is active against rat Nav1.2/SCN2A and B.germanica Nav1. This is Alpha-toxin Bot9 from Buthus occitanus tunetanus (Common European scorpion).